The primary structure comprises 557 residues: Acetylcholine receptor subunit alpha-L1 (557 aa).

The first 23 residues, 1–23 (MAAALPPMLLLLLLLLLHHPAAA), serve as a signal peptide directing secretion. Residues 24-244 (NPDAKRLYDD…NITLRRKTLF (221 aa)) are Extracellular-facing. Residue Asn-47 is glycosylated (N-linked (GlcNAc...) asparagine). 2 disulfide bridges follow: Cys-151–Cys-165 and Cys-224–Cys-225. The N-linked (GlcNAc...) asparagine glycan is linked to Asn-235. Helical transmembrane passes span 245–266 (YTVN…VFYL), 274–294 (IALC…ISEI), and 308–329 (YLLF…VLNV). Topologically, residues 330–500 (HYRKPSTHKM…EFDAEDQDWG (171 aa)) are cytoplasmic. Residues 501-523 (FVAMVLDRLFLWIFTIASIVGTF) form a helical membrane-spanning segment.

The protein belongs to the ligand-gated ion channel (TC 1.A.9) family. Acetylcholine receptor (TC 1.A.9.1) subfamily.

It is found in the postsynaptic cell membrane. The protein localises to the cell membrane. After binding acetylcholine, the AChR responds by an extensive change in conformation that affects all subunits and leads to opening of an ion-conducting channel across the plasma membrane. The polypeptide is Acetylcholine receptor subunit alpha-L1 (Schistocerca gregaria (Desert locust)).